A 488-amino-acid chain; its full sequence is Glutamyl-tRNA(Gln) amidotransferase subunit A (488 aa).

Residues K77 and S152 each act as charge relay system in the active site. S176 acts as the Acyl-ester intermediate in catalysis.

The protein belongs to the amidase family. GatA subfamily. In terms of assembly, heterotrimer of A, B and C subunits.

It catalyses the reaction L-glutamyl-tRNA(Gln) + L-glutamine + ATP + H2O = L-glutaminyl-tRNA(Gln) + L-glutamate + ADP + phosphate + H(+). Its function is as follows. Allows the formation of correctly charged Gln-tRNA(Gln) through the transamidation of misacylated Glu-tRNA(Gln) in organisms which lack glutaminyl-tRNA synthetase. The reaction takes place in the presence of glutamine and ATP through an activated gamma-phospho-Glu-tRNA(Gln). This is Glutamyl-tRNA(Gln) amidotransferase subunit A from Streptococcus pneumoniae (strain Hungary19A-6).